The primary structure comprises 103 residues: BLOC-1-related complex subunit 7 (103 aa).

It belongs to the BORCS7 family.

The protein resides in the lysosome membrane. Functionally, as part of a BORC-like complex may play a role in lysosomes movement and localization at the cell periphery. Associated with the cytosolic face of lysosomes, this complex may couple lysosomes to microtubule plus-end-directed kinesin motor. The polypeptide is BLOC-1-related complex subunit 7 (Danio rerio (Zebrafish)).